Reading from the N-terminus, the 760-residue chain is Protein P1 (760 aa).

An N-terminal signal peptide occupies residues 1-33 (MASFLKPVNSQGLWLSLLLAITYLFLLPSAGQS). Transmembrane regions (helical) follow at residues 172–192 (LIEF…VYVA), 194–214 (AVPG…WAWP), 218–235 (ASSL…IGFL), and 240–260 (IGLI…WSLL). The Peptidase S39 domain maps to 318–515 (IPGVQIKKLR…SSSPKFTGCE (198 aa)). Catalysis depends on for protease activity residues H366, D396, and S465. Disordered regions lie at residues 572 to 672 (GLWA…LSQV) and 684 to 760 (LTVQ…PRRN). Basic and acidic residues predominate over residues 621–643 (RAEKVRHVRRSEMTPEQKRADNL).

It belongs to the peptidase S39B family. Specific enzymatic cleavages in vivo yield mature proteins. The protease probably cleaves itself and releases the VPg protein.

The protein resides in the membrane. Functionally, precursor from which the VPg molecule is probably released at the onset of the RNA synthesis. Essential for virus replication. The sequence is that of Protein P1 from Pea enation mosaic virus-1 (strain WSG) (PEMV-1).